Here is an 805-residue protein sequence, read N- to C-terminus: Leucine--tRNA ligase (805 aa).

Residues 40 to 51 (PYPSGAGLHVGH) carry the 'HIGH' region motif. A 'KMSKS' region motif is present at residues 576–580 (KMSKS). Lysine 579 provides a ligand contact to ATP.

It belongs to the class-I aminoacyl-tRNA synthetase family.

It localises to the cytoplasm. The catalysed reaction is tRNA(Leu) + L-leucine + ATP = L-leucyl-tRNA(Leu) + AMP + diphosphate. The protein is Leucine--tRNA ligase of Anoxybacillus flavithermus (strain DSM 21510 / WK1).